The following is a 357-amino-acid chain: Anthranilate phosphoribosyltransferase (357 aa).

Residues glycine 94, 97–98, threonine 102, 104–107, 122–130, and glycine 134 contribute to the 5-phospho-alpha-D-ribose 1-diphosphate site; these read GD, NLST, and KHGNRAASS. An anthranilate-binding site is contributed by glycine 94. Serine 106 contributes to the Mg(2+) binding site. Asparagine 125 contacts anthranilate. Arginine 180 is a binding site for anthranilate. Mg(2+) contacts are provided by aspartate 238 and glutamate 239.

This sequence belongs to the anthranilate phosphoribosyltransferase family. As to quaternary structure, homodimer. Mg(2+) is required as a cofactor.

It carries out the reaction N-(5-phospho-beta-D-ribosyl)anthranilate + diphosphate = 5-phospho-alpha-D-ribose 1-diphosphate + anthranilate. It participates in amino-acid biosynthesis; L-tryptophan biosynthesis; L-tryptophan from chorismate: step 2/5. In terms of biological role, catalyzes the transfer of the phosphoribosyl group of 5-phosphorylribose-1-pyrophosphate (PRPP) to anthranilate to yield N-(5'-phosphoribosyl)-anthranilate (PRA). The chain is Anthranilate phosphoribosyltransferase from Mycobacterium sp. (strain KMS).